The sequence spans 130 residues: Protein ApaG (130 aa).

The ApaG domain occupies 3-127; the sequence is SAVTQDIQIT…FSLDSPFVRR (125 aa).

This is Protein ApaG from Methylocella silvestris (strain DSM 15510 / CIP 108128 / LMG 27833 / NCIMB 13906 / BL2).